The primary structure comprises 940 residues: Gamma-aminobutyric acid type B receptor subunit 2 (940 aa).

The signal sequence occupies residues Met1–Gly40. The Extracellular portion of the chain corresponds to Trp41–Ser482. A glycan (N-linked (GlcNAc...) asparagine) is linked at Asn89. 3 cysteine pairs are disulfide-bonded: Cys107–Cys134, Cys236–Cys265, and Cys264–Cys301. Asn297, Asn388, Asn403, and Asn452 each carry an N-linked (GlcNAc...) asparagine glycan. Residues Ile483–Ile503 traverse the membrane as a helical segment. At Lys504–Leu521 the chain is on the cytoplasmic side. The chain crosses the membrane as a helical span at residues Ile522 to Phe542. Residues Val543 to Thr550 are Extracellular-facing. A helical membrane pass occupies residues Leu551–Phe571. At Ala572–Leu596 the chain is on the cytoplasmic side. Residues Leu597–Val617 form a helical membrane-spanning segment. Over Asp618–Thr653 the chain is Extracellular. Residues Ile654–Ala674 form a helical membrane-spanning segment. The Cytoplasmic portion of the chain corresponds to Trp675 to Tyr690. The chain crosses the membrane as a helical span at residues Ile691–Leu711. Residues Thr712–Gln719 lie on the Extracellular side of the membrane. Residues Phe720–Val740 form a helical membrane-spanning segment. The Cytoplasmic segment spans residues Pro741–Leu940. The interval Thr762 to Gly789 is disordered. Residues Thr772 to Arg786 are compositionally biased toward polar residues. A phosphoserine mark is found at Ser775 and Ser778. Residues Gln781–Thr818 adopt a coiled-coil conformation. Residue Thr818 is modified to Phosphothreonine. Ser883, Ser892, Ser912, Ser915, Ser919, and Ser923 each carry phosphoserine.

The protein belongs to the G-protein coupled receptor 3 family. GABA-B receptor subfamily. Heterodimer of GABBR1 and GABBR2. Homodimers may form, but are inactive. Interacts (via C-terminus) with ATF4 (via leucine zipper domain).

It localises to the cell membrane. It is found in the postsynaptic cell membrane. Functionally, component of a heterodimeric G-protein coupled receptor for GABA, formed by GABBR1 and GABBR2. Within the heterodimeric GABA receptor, only GABBR1 seems to bind agonists, while GABBR2 mediates coupling to G proteins. Ligand binding causes a conformation change that triggers signaling via guanine nucleotide-binding proteins (G proteins) and modulates the activity of down-stream effectors, such as adenylate cyclase. Signaling inhibits adenylate cyclase, stimulates phospholipase A2, activates potassium channels, inactivates voltage-dependent calcium-channels and modulates inositol phospholipid hydrolysis. Plays a critical role in the fine-tuning of inhibitory synaptic transmission. Pre-synaptic GABA receptor inhibits neurotransmitter release by down-regulating high-voltage activated calcium channels, whereas postsynaptic GABA receptor decreases neuronal excitability by activating a prominent inwardly rectifying potassium (Kir) conductance that underlies the late inhibitory postsynaptic potentials. Not only implicated in synaptic inhibition but also in hippocampal long-term potentiation, slow wave sleep, muscle relaxation and antinociception. Interacts with KCTD8, KCTD12 and KCTD16; this interaction determines the pharmacology and kinetics of the receptor response, the KCTD proteins markedly accelerating the GABA-B response, although to different extents. This Mus musculus (Mouse) protein is Gamma-aminobutyric acid type B receptor subunit 2 (Gabbr2).